Consider the following 267-residue polypeptide: Diacetylchitobiose deacetylase (267 aa).

It belongs to the PIGL family. As to quaternary structure, homohexamer.

Its subcellular location is the cytoplasm. It carries out the reaction N,N'-diacetylchitobiose + H2O = beta-D-glucosaminyl-(1-&gt;4)-N-acetyl-D-glucosamine + acetate. It participates in glycan degradation; chitin degradation. In terms of biological role, deacylates the non-reducing end of diacetylchitobiose (GlcNAc2). Can also use N-acetylglucosamine (GlcNAc) and N-acetylchitotriose (GlcNAc3). Probably involved in chitin degradation. The sequence is that of Diacetylchitobiose deacetylase (dac) from Thermococcus kodakarensis (strain ATCC BAA-918 / JCM 12380 / KOD1) (Pyrococcus kodakaraensis (strain KOD1)).